Here is a 201-residue protein sequence, read N- to C-terminus: Holliday junction branch migration complex subunit RuvA (201 aa).

A domain I region spans residues 1–63 (MIEYIKGEIA…EDAYVLYGFA (63 aa)). The interval 64–142 (DKQERELFLL…TGAMAATAVG (79 aa)) is domain II. The segment at 143–153 (GAAGALLPAMN) is flexible linker. The tract at residues 153 to 201 (NAEVQEEAIAALTMLGFAAAPSQKAVLAILKEEPDAPVEKVIKLALKRL) is domain III.

It belongs to the RuvA family. As to quaternary structure, homotetramer. Forms an RuvA(8)-RuvB(12)-Holliday junction (HJ) complex. HJ DNA is sandwiched between 2 RuvA tetramers; dsDNA enters through RuvA and exits via RuvB. An RuvB hexamer assembles on each DNA strand where it exits the tetramer. Each RuvB hexamer is contacted by two RuvA subunits (via domain III) on 2 adjacent RuvB subunits; this complex drives branch migration. In the full resolvosome a probable DNA-RuvA(4)-RuvB(12)-RuvC(2) complex forms which resolves the HJ.

The protein localises to the cytoplasm. Its function is as follows. The RuvA-RuvB-RuvC complex processes Holliday junction (HJ) DNA during genetic recombination and DNA repair, while the RuvA-RuvB complex plays an important role in the rescue of blocked DNA replication forks via replication fork reversal (RFR). RuvA specifically binds to HJ cruciform DNA, conferring on it an open structure. The RuvB hexamer acts as an ATP-dependent pump, pulling dsDNA into and through the RuvAB complex. HJ branch migration allows RuvC to scan DNA until it finds its consensus sequence, where it cleaves and resolves the cruciform DNA. This chain is Holliday junction branch migration complex subunit RuvA, found in Bacteroides fragilis (strain ATCC 25285 / DSM 2151 / CCUG 4856 / JCM 11019 / LMG 10263 / NCTC 9343 / Onslow / VPI 2553 / EN-2).